A 64-amino-acid chain; its full sequence is Putative isoleucine--tRNA ligase (64 aa).

It belongs to the class-I aminoacyl-tRNA synthetase family. In terms of assembly, member of a complex that includes annexin.

The catalysed reaction is tRNA(Ile) + L-isoleucine + ATP = L-isoleucyl-tRNA(Ile) + AMP + diphosphate. This is Putative isoleucine--tRNA ligase from Physarum polycephalum (Slime mold).